We begin with the raw amino-acid sequence, 743 residues long: Threonine synthase-like 1 (743 aa).

Lys281 carries the post-translational modification N6-acetyllysine. Lys351 carries the N6-(pyridoxal phosphate)lysine modification.

It belongs to the threonine synthase family. Requires pyridoxal 5'-phosphate as cofactor.

The sequence is that of Threonine synthase-like 1 (THNSL1) from Pongo abelii (Sumatran orangutan).